Reading from the N-terminus, the 280-residue chain is Ribosomal protein L11 methyltransferase (280 aa).

4 residues coordinate S-adenosyl-L-methionine: threonine 131, glycine 152, aspartate 174, and asparagine 217.

It belongs to the methyltransferase superfamily. PrmA family.

It localises to the cytoplasm. The catalysed reaction is L-lysyl-[protein] + 3 S-adenosyl-L-methionine = N(6),N(6),N(6)-trimethyl-L-lysyl-[protein] + 3 S-adenosyl-L-homocysteine + 3 H(+). Functionally, methylates ribosomal protein L11. The sequence is that of Ribosomal protein L11 methyltransferase from Bacteroides thetaiotaomicron (strain ATCC 29148 / DSM 2079 / JCM 5827 / CCUG 10774 / NCTC 10582 / VPI-5482 / E50).